A 1471-amino-acid chain; its full sequence is Myosin-4 (1471 aa).

The 54-residue stretch at 4-57 (EVGTKCWYPHKEQGWIGGEVTKNDFFEGTFHLELKLEDGETVSIETNSFENDDD) folds into the Myosin N-terminal SH3-like domain. Positions 71–777 (ESTDDLTTLS…MLAFLEKLRT (707 aa)) constitute a Myosin motor domain. 165–172 (GESGAGKT) contacts ATP. Residues 647 to 669 (LGELMAIINSTNVHYIRCIKPNS) form an actin-binding region. 5 IQ domains span residues 781–801 (NEIC…LQYL), 804–824 (MESI…TRVD), 829–849 (TRAA…EYYR), 876–898 (MLMA…DYRT), and 899–928 (LKRS…EVEE). The stretch at 938–1063 (GLLEEAIEFK…LAFIENVIAQ (126 aa)) forms a coiled coil. The Dilute domain maps to 1164–1419 (SKVLLTVESI…LNYLANVIKR (256 aa)).

The protein belongs to the TRAFAC class myosin-kinesin ATPase superfamily. Myosin family. Interacts with SHE2 and SHE3.

It is found in the bud. In terms of biological role, part of the mRNA localization machinery that restricts accumulation of certain proteins to the bud and in the daughter cell. Recruited to specific mRNAs including the ASH1 mRNA, coding for a repressor of the HO endonuclease, via its interaction with SHE3. The protein is Myosin-4 (MYO4) of Saccharomyces cerevisiae (strain ATCC 204508 / S288c) (Baker's yeast).